The chain runs to 318 residues: MDRTSSRCKVAIIGSGNIGTDLMIKVLRHGRHLEMGAMVGIDPASDGLARAKRLGVATTAQGVEGLLALPEFKDIGIAFDATSAGAHARHNELLQAHGVKVIDLTPAAIGPYVVPAINLDAELDAPNINMVTCGGQATIPMVAAVSRVAQVHYAEIVASIASKSAGPGTRANIDEFTETTSKAIEVIGGARKGKAIIVLNPAEPPLIMRDSVFVLSEVVDRDAIAASVKEMVASVQRYVPGYRLKQEVQFELIEKPANVPGVGLVSGLKTSIFLEVEGAAHYLPAYAGNLDIMTSAALSCAERLAERGKVRTLPSALV.

S15 to I18 serves as a coordination point for NAD(+). C133 (acyl-thioester intermediate) is an active-site residue. Residues S164 to N172 and N289 contribute to the NAD(+) site.

This sequence belongs to the acetaldehyde dehydrogenase family.

It catalyses the reaction acetaldehyde + NAD(+) + CoA = acetyl-CoA + NADH + H(+). In Azotobacter vinelandii (strain DJ / ATCC BAA-1303), this protein is Acetaldehyde dehydrogenase 1 (xylQ).